The following is a 246-amino-acid chain: NLP effector protein 2 (246 aa).

Residues 1 to 19 (MKFVVFLCAIAAVVATIQG) form the signal peptide. The Conserved undecapeptide motif I signature appears at 113-123 (AIMYSWYFPKD). Residues 130–136 (GHRHDWE) carry the Hepta-peptide GHRHDWE motif II motif.

Belongs to the Necrosis inducing protein (NPP1) family.

It localises to the secreted. Functionally, secreted effector that contributes strongly to virulence during infection by P.capsici. Causes large necrotic areas in both host C.annuum and non-host N.benthamiana. This chain is NLP effector protein 2, found in Phytophthora capsici.